Consider the following 95-residue polypeptide: MSVDAATVRKIASLARIAVTDGDVEAMVPELNNILGWIEQLGEVDTDGVAPLAAVIPNHQRLRDDVVTDGNIRDKVLANAPQAEHGFFAVPKVIE.

Belongs to the GatC family. As to quaternary structure, heterotrimer of A, B and C subunits.

It carries out the reaction L-glutamyl-tRNA(Gln) + L-glutamine + ATP + H2O = L-glutaminyl-tRNA(Gln) + L-glutamate + ADP + phosphate + H(+). It catalyses the reaction L-aspartyl-tRNA(Asn) + L-glutamine + ATP + H2O = L-asparaginyl-tRNA(Asn) + L-glutamate + ADP + phosphate + 2 H(+). In terms of biological role, allows the formation of correctly charged Asn-tRNA(Asn) or Gln-tRNA(Gln) through the transamidation of misacylated Asp-tRNA(Asn) or Glu-tRNA(Gln) in organisms which lack either or both of asparaginyl-tRNA or glutaminyl-tRNA synthetases. The reaction takes place in the presence of glutamine and ATP through an activated phospho-Asp-tRNA(Asn) or phospho-Glu-tRNA(Gln). This chain is Aspartyl/glutamyl-tRNA(Asn/Gln) amidotransferase subunit C, found in Rhizorhabdus wittichii (strain DSM 6014 / CCUG 31198 / JCM 15750 / NBRC 105917 / EY 4224 / RW1) (Sphingomonas wittichii).